A 427-amino-acid polypeptide reads, in one-letter code: Trigger factor (427 aa).

A PPIase FKBP-type domain is found at 163–248; it reads GDTVVIDFVG…IHEVKAKEVP (86 aa).

This sequence belongs to the FKBP-type PPIase family. Tig subfamily.

The protein resides in the cytoplasm. The catalysed reaction is [protein]-peptidylproline (omega=180) = [protein]-peptidylproline (omega=0). In terms of biological role, involved in protein export. Acts as a chaperone by maintaining the newly synthesized protein in an open conformation. Functions as a peptidyl-prolyl cis-trans isomerase. This chain is Trigger factor, found in Streptococcus suis (strain 98HAH33).